The primary structure comprises 86 residues: MAVVLRLARAGVKKKPYYHVVATDSRNPRDGKFIEAVGAYDPNQEPPKVEFNEERLNYWLKTGATPSETVADLIKVAGKAKPAPAV.

This sequence belongs to the bacterial ribosomal protein bS16 family.

The sequence is that of Small ribosomal subunit protein bS16 from Myxococcus xanthus (strain DK1622).